The primary structure comprises 86 residues: Small ribosomal subunit protein bS20 (86 aa).

This sequence belongs to the bacterial ribosomal protein bS20 family.

In terms of biological role, binds directly to 16S ribosomal RNA. The protein is Small ribosomal subunit protein bS20 of Arthrobacter sp. (strain FB24).